A 102-amino-acid polypeptide reads, in one-letter code: MPKQKIRIRLKAFDHAILDQSAQKIVETAKRTGAEVSGPIPLPTEKDIITILRAPHKYKDSREQFEIRTHKRLIDILNPTPKTVDALMRLDLPSGVDIEIKL.

The protein belongs to the universal ribosomal protein uS10 family. Part of the 30S ribosomal subunit.

Functionally, involved in the binding of tRNA to the ribosomes. The protein is Small ribosomal subunit protein uS10 of Thermoanaerobacter pseudethanolicus (strain ATCC 33223 / 39E) (Clostridium thermohydrosulfuricum).